The sequence spans 166 residues: 2-amino-4-hydroxy-6-hydroxymethyldihydropteridine pyrophosphokinase (166 aa).

Belongs to the HPPK family.

It catalyses the reaction 6-hydroxymethyl-7,8-dihydropterin + ATP = (7,8-dihydropterin-6-yl)methyl diphosphate + AMP + H(+). The protein operates within cofactor biosynthesis; tetrahydrofolate biosynthesis; 2-amino-4-hydroxy-6-hydroxymethyl-7,8-dihydropteridine diphosphate from 7,8-dihydroneopterin triphosphate: step 4/4. Catalyzes the transfer of pyrophosphate from adenosine triphosphate (ATP) to 6-hydroxymethyl-7,8-dihydropterin, an enzymatic step in folate biosynthesis pathway. In Streptococcus pyogenes serotype M18 (strain MGAS8232), this protein is 2-amino-4-hydroxy-6-hydroxymethyldihydropteridine pyrophosphokinase (folK).